Reading from the N-terminus, the 321-residue chain is NADPH-dependent codeinone reductase 1-3 (321 aa).

NADPH-binding residues include Thr27 and Asp51. Active-site proton donor residues include Tyr56 and His119. A substrate-binding site is contributed by His119. Residues Gln187, Ser214, Leu216, Ser264, and Arg269 each contribute to the NADPH site. The segment at 300–321 (ADFLLSPTGPFKTEEEFWDEKD) is disordered.

This sequence belongs to the aldo/keto reductase family. As to expression, latex secreting cells (laticifer cells). Expressed constitutively in all organs with highest levels in capsules. Restricted to the parietal region of sieve elements adjacent or proximal to laticifers in roots, stems, leaves and carpels.

The protein localises to the cytoplasm. It localises to the cytosol. The catalysed reaction is codeine + NADP(+) = codeinone + NADPH + H(+). It carries out the reaction neopine + NADP(+) = neopinone + NADPH + H(+). The enzyme catalyses morphine + NADP(+) = morphinone + NADPH + H(+). It catalyses the reaction neomorphine + NADP(+) = neomorphinone + NADPH + H(+). It functions in the pathway alkaloid biosynthesis; morphine biosynthesis. Its function is as follows. NADPH-dependent codeinone reductase involved in biosynthesis of morphinan-type benzylisoquinoline and opiate alkaloids natural products. Reduces codeinone to codeine in the penultimate step in morphine biosynthesis. Can use morphinone, hydrocodone and hydromorphone as substrate during reductive reaction with NADPH as cofactor, and morphine and dihydrocodeine as substrate during oxidative reaction with NADP as cofactor. Converts morphinone to morphine, and neomorphinone to neomorphine. Reduces irreversibly neopinone, a spontaneous isomer of codeinone, to neopine; in planta, neopine levels are limited to low levels. In Papaver somniferum (Opium poppy), this protein is NADPH-dependent codeinone reductase 1-3.